Consider the following 281-residue polypeptide: UPF0500 protein C1orf216 homolog (281 aa).

Over residues M1–H12 the composition is skewed to polar residues. The segment at M1–V197 is disordered. The segment covering T45–S74 has biased composition (basic and acidic residues). Composition is skewed to low complexity over residues S92 to S102, S147 to S161, and P169 to N178. A compositionally biased stretch (acidic residues) spans P179 to S190. Residues T198–I257 are a coiled coil.

The protein belongs to the UPF0500 family.

The chain is UPF0500 protein C1orf216 homolog from Xenopus laevis (African clawed frog).